A 59-amino-acid polypeptide reads, in one-letter code: MFAGLPSLTHEQQQKAVERIQELMAQGMSSGQAIALVAEELRANHSGERIVARFEDEDE.

The protein belongs to the UPF0181 family.

This Shigella sonnei (strain Ss046) protein is UPF0181 protein YoaH.